The sequence spans 432 residues: Alcohol acyltransferase 9 (432 aa).

Catalysis depends on proton acceptor residues His156 and Asp379.

This sequence belongs to the plant acyltransferase family. As to expression, expressed in fruit.

It carries out the reaction 2-(methylsulfanyl)acetyl-CoA + butan-1-ol = butyl 2-(methylsulfanyl)acetate + CoA. It catalyses the reaction ethanol + acetyl-CoA = ethyl acetate + CoA. The enzyme catalyses butan-1-ol + acetyl-CoA = butyl acetate + CoA. The catalysed reaction is butan-1-ol + propanoyl-CoA = butyl propanoate + CoA. Functionally, involved in the biosynthesis of volatile esters which confer kiwifruit flavor. Alcohol acyl transferase that can use a wide range of alcohols as substrate to produce esters. Exhibits acetyl-CoA:alcohol O-acyltransferase activity. This is Alcohol acyltransferase 9 from Actinidia eriantha (Velvet vine).